The sequence spans 396 residues: uncharacterized protein (396 aa).

Transmembrane regions (helical) follow at residues 12 to 32 (LLAL…SVGL), 48 to 68 (GLTV…LTSL), 78 to 98 (LLWI…ASSI), 106 to 126 (VISA…AADI), 138 to 158 (IMFT…TFIG), 165 to 185 (FAFM…GILV), 209 to 229 (LLLL…VFTY), 242 to 262 (AGTV…GNMI), 271 to 291 (PIAA…VLTF), 297 to 317 (AAGL…VPGL), 338 to 358 (AMNI…GGVI), and 362 to 382 (IGLI…VILT).

The protein belongs to the major facilitator superfamily.

Its subcellular location is the cell membrane. This is an uncharacterized protein from Bacillus subtilis (strain 168).